We begin with the raw amino-acid sequence, 1108 residues long: Ubiquitin carboxyl-terminal hydrolase 5 (1108 aa).

The MATH domain maps to 55–187 (FQRFTWHIKS…DGALLLTAYV (133 aa)). Active-site nucleophile residues include cysteine 120 and cysteine 222. Residues 213-528 (VGLKNQGATC…SAYMLLYLRK (316 aa)) enclose the USP domain. Residue histidine 464 is the Proton acceptor of the active site.

This sequence belongs to the peptidase C19 family.

It is found in the nucleus. It carries out the reaction Thiol-dependent hydrolysis of ester, thioester, amide, peptide and isopeptide bonds formed by the C-terminal Gly of ubiquitin (a 76-residue protein attached to proteins as an intracellular targeting signal).. Its function is as follows. Hydrolase that deubiquitinates target proteins. Cleaves the UBL propeptide in sde2. This is Ubiquitin carboxyl-terminal hydrolase 5 (ubp5) from Schizosaccharomyces pombe (strain 972 / ATCC 24843) (Fission yeast).